We begin with the raw amino-acid sequence, 243 residues long: 6-carboxyhexanoate--CoA ligase (243 aa).

The protein belongs to the BioW family. As to quaternary structure, homodimer. Mg(2+) serves as cofactor.

The catalysed reaction is heptanedioate + ATP + CoA = 6-carboxyhexanoyl-CoA + AMP + diphosphate. It participates in metabolic intermediate metabolism; pimeloyl-CoA biosynthesis; pimeloyl-CoA from pimelate: step 1/1. Functionally, catalyzes the transformation of pimelate into pimeloyl-CoA with concomitant hydrolysis of ATP to AMP. The chain is 6-carboxyhexanoate--CoA ligase from Corynebacterium pseudotuberculosis (strain FRC41).